An 886-amino-acid chain; its full sequence is Adhesion G protein-coupled receptor E1 (886 aa).

Residues 1-20 (MRGFNLLLFWGCCVMHSWEG) form the signal peptide. Over 21–599 (HIRPTRKPNT…IMASGELTMD (579 aa)) the chain is Extracellular. The EGF-like 1 domain maps to 31 to 79 (KGNNCRDSTLCPAYATCTNTVDSYYCACKQGFLSSNGQNHFKDPGVRCK). 18 disulfides stabilise this stretch: cysteine 35-cysteine 47, cysteine 41-cysteine 56, cysteine 58-cysteine 78, cysteine 84-cysteine 97, cysteine 91-cysteine 106, cysteine 108-cysteine 130, cysteine 136-cysteine 148, cysteine 142-cysteine 157, cysteine 159-cysteine 170, cysteine 176-cysteine 188, cysteine 182-cysteine 197, cysteine 199-cysteine 219, cysteine 225-cysteine 235, cysteine 229-cysteine 244, cysteine 246-cysteine 266, cysteine 272-cysteine 285, cysteine 279-cysteine 294, and cysteine 296-cysteine 315. The 52-residue stretch at 80–131 (DIDECSQSPQPCGPNSSCKNLSGRYKCSCLDGFSSPTGNDWVPGKPGNFSCT) folds into the EGF-like 2; calcium-binding domain. Residues asparagine 94, asparagine 99, and asparagine 127 are each glycosylated (N-linked (GlcNAc...) asparagine). In terms of domain architecture, EGF-like 3; calcium-binding spans 132–171 (DINECLTSSVCPEHSDCVNSMGSYSCSCQVGFISRNSTCE). An N-linked (GlcNAc...) asparagine glycan is attached at asparagine 167. In terms of domain architecture, EGF-like 4; calcium-binding spans 172–220 (DVDECADPRACPEHATCNNTVGNYSCFCNPGFESSSGHLSFQGLKASCE). Asparagine 189 and asparagine 194 each carry an N-linked (GlcNAc...) asparagine glycan. One can recognise an EGF-like 5; calcium-binding domain in the interval 221–267 (DIDECTEMCPINSTCTNTPGSYFCTCHPGFAPSNGQLNFTDQGVECR). N-linked (GlcNAc...) asparagine glycosylation is found at asparagine 232 and asparagine 258. The 49-residue stretch at 268–316 (DIDECRQDPSTCGPNSICTNALGSYSCGCIAGFHPNPEGSQKDGNFSCQ) folds into the EGF-like 6; calcium-binding domain. N-linked (GlcNAc...) asparagine glycosylation is found at asparagine 312, asparagine 366, asparagine 375, and asparagine 448. The region spanning 431–597 (EYLDIESKVI…AVIMASGELT (167 aa)) is the GAIN-B domain. 2 disulfide bridges follow: cysteine 550-cysteine 579 and cysteine 567-cysteine 581. The tract at residues 550–597 (CVSWSTDVKGGRWTSFGCVILEASETYTICSCNQMANLAVIMASGELT) is GPS. Residues 600 to 627 (FSLYIISHVGIIISLVCLVLAIATFLLC) form a helical membrane-spanning segment. Residues 628 to 634 (RSIRNHN) are Cytoplasmic-facing. Residues 635-656 (TYLHLHLCVCLLLAKTLFLAGI) form a helical membrane-spanning segment. Residues 657–666 (HKTDNKMGCA) lie on the Extracellular side of the membrane. The helical transmembrane segment at 667 to 690 (IIAGFLHYLFLACFFWMLVEAVIL) threads the bilayer. Residues 691 to 709 (FLMVRNLKVVNYFSSRNIK) are Cytoplasmic-facing. The chain crosses the membrane as a helical span at residues 710–731 (MLHICAFGYGLPMLVVVISASV). Over 732 to 747 (QPQGYGMHNRCWLNTE) the chain is Extracellular. Residues 748-776 (TGFIWSFLGPVCTVIVINSLLLTWTLWIL) form a helical membrane-spanning segment. At 777-794 (RQRLSSVNAEVSTLKDTR) the chain is on the cytoplasmic side. The chain crosses the membrane as a helical span at residues 795–814 (LLTFKAFAQLFILGCSWVLG). At 815–829 (IFQIGPVAGVMAYLF) the chain is on the extracellular side. Residues 830 to 852 (TIINSLQGAFIFLIHCLLNGQVR) traverse the membrane as a helical segment. Over 853–886 (EEYKRWITGKTKPSSQSQTSRILLSSMPSASKTG) the chain is Cytoplasmic. A disordered region spans residues 862–886 (KTKPSSQSQTSRILLSSMPSASKTG). Over residues 863–886 (TKPSSQSQTSRILLSSMPSASKTG) the composition is skewed to polar residues.

The protein belongs to the G-protein coupled receptor 2 family. Adhesion G-protein coupled receptor (ADGR) subfamily. As to expression, expression is restricted to eosinophils.

The protein localises to the cell membrane. In terms of biological role, orphan receptor involved in cell adhesion and probably in cell-cell interactions specifically involving cells of the immune system. May play a role in regulatory T-cells (Treg) development. This Homo sapiens (Human) protein is Adhesion G protein-coupled receptor E1.